We begin with the raw amino-acid sequence, 669 residues long: UvrABC system protein B (669 aa).

Positions Glu26–Arg183 constitute a Helicase ATP-binding domain. Gly39 to Thr46 serves as a coordination point for ATP. The Beta-hairpin motif lies at Tyr92–Val115. Residues Gln431–Ile593 form the Helicase C-terminal domain. One can recognise a UVR domain in the interval Glu629–Gln664.

The protein belongs to the UvrB family. As to quaternary structure, forms a heterotetramer with UvrA during the search for lesions. Interacts with UvrC in an incision complex.

The protein localises to the cytoplasm. Its function is as follows. The UvrABC repair system catalyzes the recognition and processing of DNA lesions. A damage recognition complex composed of 2 UvrA and 2 UvrB subunits scans DNA for abnormalities. Upon binding of the UvrA(2)B(2) complex to a putative damaged site, the DNA wraps around one UvrB monomer. DNA wrap is dependent on ATP binding by UvrB and probably causes local melting of the DNA helix, facilitating insertion of UvrB beta-hairpin between the DNA strands. Then UvrB probes one DNA strand for the presence of a lesion. If a lesion is found the UvrA subunits dissociate and the UvrB-DNA preincision complex is formed. This complex is subsequently bound by UvrC and the second UvrB is released. If no lesion is found, the DNA wraps around the other UvrB subunit that will check the other stand for damage. In Proteus mirabilis (strain HI4320), this protein is UvrABC system protein B.